A 448-amino-acid polypeptide reads, in one-letter code: Beclin-1 (448 aa).

Met-1 is subject to N-acetylmethionine. Phosphoserine is present on residues Ser-14 and Ser-29. Residues Ser-88, Ser-91, and Ser-94 each carry the phosphoserine; by AMPK modification. The BH3 signature appears at 106-125; sequence TMENLSRRLKVTGDLFDIMS. The interaction with BCL2 and BCL2L1 stretch occupies residues 110–157; it reads LSRRLKVTGDLFDIMSGQTDVDHPLCEECTDTLLDQLDTQLNVTENEC. Thr-117 is subject to Phosphothreonine; by DAPK1. Residues 140-267 adopt a coiled-coil conformation; it reads DTLLDQLDTQ…QLDKLKKTNV (128 aa). The segment at 243–448 is evolutionary conserved domain (ECD); that stretch reads DELKSVENQM…AWVSSQFYNK (206 aa). Residues Lys-400 and Lys-435 each participate in a glycyl lysine isopeptide (Lys-Gly) (interchain with G-Cter in ubiquitin) cross-link. The interval 423 to 448 is required for membrane-association; it reads WTKALKFMLTNLKWGLAWVSSQFYNK.

This sequence belongs to the beclin family. A homodimeric form is proposed to exist; this metastable form readily transits to ATG14- or UVRAG-containing complexes with BECN1:UVRAG being more stable than BECN1:ATG14. Component of the PI3K (PI3KC3/PI3K-III/class III phosphatidylinositol 3-kinase) complex the core of which is composed of the catalytic subunit PIK3C3, the regulatory subunit PIK3R4 and BECN1 associating with additional regulatory/auxiliary subunits to form alternative complex forms. Alternative complex forms containing a fourth regulatory subunit in a mutually exclusive manner are PI3K complex I (PI3KC3-C1) containing ATG14, and PI3K complex II (PI3KC3-C2) containing UVRAG. PI3KC3-C1 displays a V-shaped architecture with PIK3R4 serving as a bridge between PIK3C3 and the ATG14:BECN1 subcomplex. Both, PI3KC3-C1 and PI3KC3-C2, can associate with further regulatory subunits, such as RUBCN, SH3GLB1/Bif-1 and AMBRA1. PI3KC3-C1 probably associates with PIK3CB. Forms a complex with PPP2CA and AMBRA1; AMBRA1 and BECN1 components of the complex regulate MYC stability via different pathways. Component of the complex, at least composed of LRPPRC, BECN1 and BCL2; the interactions prevent BECN1 from forming an autophagy-inducing complex with PIK3C3. Interacts with AMBRA1, GOPC, GRID2. Interacts with BCL2 and BCL2L1 isoform Bcl-X(L); the interaction inhibits BECN1 function in promoting autophagy by interfering with the formation of the PI3K complex. Interacts with cytosolic HMGB1; inhibits the interaction of BECN1 and BCL2 leading to promotion of autophagy. Interacts with USP10, USP13, VMP1, DAPK1, RAB39A. Interacts with the poly-Gln domain of ATXN3; the interaction causes deubiquitination at Lys-400 and stabilizes BECN1. Interacts with SLAMF1. Interacts with TRIM5; the interaction causes activation of BECN1 by causing its dissociation from its inhibitors BCL2 and TAB2. Interacts with active ULK1 (phosphorylated on 'Ser-317') and MEFV simultaneously. Interacts with WDR81 and WDR91; negatively regulates the PI3 kinase/PI3K activity associated with endosomal membranes. Interacts with LAPTM4B; competes with EGFR for LAPTM4B binding; regulates EGFR activity. Interacts with TRIM50. Interacts with TRIM16. Interacts with ATG14; this interaction is increased in the absence of TMEM39A. Interacts with WASHC1; preventing interaction with AMBRA1 and the DCX(AMBRA1) complex and subsequent ubiquitination. Interacts with TRIM17. Interacts with BCL2L10/BCL-B (via BH1 domain). Interacts with SH3BGRL. Interacts with IRGM; enhancing BECN1-interacting partners and influencing the composition of the BECN1 complex. Interacts with ARMC3. Interacts with LRPPRC. As to quaternary structure, (Microbial infection) Interacts with African swine fever virus (ASFV) apoptosis regulator Bcl-2 homolog; this interaction allows the virus to inhibit BECN1, and thus autophagy. In terms of processing, phosphorylation at Thr-117 by DAPK1 reduces its interaction with BCL2 and BCL2L1 and promotes induction of autophagy. In response to autophagic stimuli, phosphorylated at serine residues by AMPK in an ATG14-dependent manner, and this phosphorylation is critical for maximally efficient autophagy. Polyubiquitinated by NEDD4, both with 'Lys-11'- and 'Lys-63'-linkages. 'Lys-11'-linked polyubiquitination leads to degradation and is enhanced when the stabilizing interaction partner VPS34 is depleted. Deubiquitinated by USP10 and USP13, leading to stabilize the PIK3C3/VPS34-containing complexes. Polyubiquitinated at Lys-400 with 'Lys-48'-linkages. 'Lys-48'-linked polyubiquitination of Lys-400 leads to degradation. Deubiquitinated by ATXN3, leading to stabilization. Ubiquitinated at Lys-435 via 'Lys-63'-linkage by the DCX(AMBRA1) complex, thereby increasing the association between BECN1 and PIK3C3 to promote PIK3C3 activity. 'Lys-48'-linked ubiquitination by RNF216 leads to proteasomal degradation and autophagy inhibition. Post-translationally, proteolytically processed by caspases including CASP8 and CASP3; the C-terminal fragments lack autophagy-inducing capacity and are proposed to induce apoptosis. Thus the cleavage is proposed to be an determinant to switch from autophagy to apoptosis pathways affecting cellular homeostasis including viral infections and survival of tumor cells.

Its subcellular location is the cytoplasm. It is found in the golgi apparatus. The protein resides in the trans-Golgi network membrane. The protein localises to the endosome membrane. It localises to the endoplasmic reticulum membrane. Its subcellular location is the mitochondrion membrane. It is found in the cytoplasmic vesicle. The protein resides in the autophagosome. The protein localises to the mitochondrion. It localises to the nucleus. Its function is as follows. Plays a central role in autophagy. Acts as a core subunit of the PI3K complex that mediates formation of phosphatidylinositol 3-phosphate; different complex forms are believed to play a role in multiple membrane trafficking pathways: PI3KC3-C1 is involved in initiation of autophagosomes and PI3KC3-C2 in maturation of autophagosomes and endocytosis. Involved in regulation of degradative endocytic trafficking and required for the abscission step in cytokinesis, probably in the context of PI3KC3-C2. Essential for the formation of PI3KC3-C2 but not PI3KC3-C1 PI3K complex forms. Involved in endocytosis. May play a role in antiviral host defense. In terms of biological role, beclin-1-C 35 kDa localized to mitochondria can promote apoptosis; it induces the mitochondrial translocation of BAX and the release of proapoptotic factors. The protein is Beclin-1 (BECN1) of Sus scrofa (Pig).